We begin with the raw amino-acid sequence, 5875 residues long: Probable E3 ubiquitin-protein ligase DDB_G0283893 (5875 aa).

Disordered regions lie at residues 17-64 (DNNN…QPPE), 164-185 (NNNNNNDNNSNNKTDDNNQSNN), 232-276 (DSNN…TTTS), 302-342 (PSFK…CGNG), 642-693 (TTTT…SPPI), 716-740 (SIRSSSNKVNEGTPKSSTTTTTTNA), 1081-1101 (ITPTNTTTTTTTTTPSTTSIP), 1291-1367 (DGWE…KEST), 1806-1851 (QESE…SSPP), 1952-1982 (KKPSSDQQHHSGGCHHSNHHHHHHHSRKDEV), 2008-2036 (EDEDELQYLSEDEKVVNGNENTGEEDDEE), 2109-2203 (KALK…TGSG), 2893-2930 (DSDDSDDEFPTVDENVTSSGLSTSAGGSGGGVAGTNDS), 3083-3119 (TSPSSSKGKSSSASASSSSSTTTATSTLPSNTQSGSN), and 3195-3214 (LLPPPSSSSNENVVDNDNTN). The span at 18–52 (NNNNNNNNNNNNNNNNNNNNNNNNNNNSNNNNNKN) shows a compositional bias: low complexity. Over residues 237 to 249 (DNKENKKEDKESS) the composition is skewed to basic and acidic residues. Low complexity-rich tracts occupy residues 250–276 (KPIASSPIPITTTNIEKPTIATTTTTS), 317–333 (TSTITTQPLPSSTITQP), and 642–656 (TTTTTATTTTTTTTT). Over residues 657 to 669 (NESIPMETTRSST) the composition is skewed to polar residues. Residues 670-693 (PIPIVNNNNNNNDSKSNSKKSPPI) show a composition bias toward low complexity. Residues 716-725 (SIRSSSNKVN) are compositionally biased toward polar residues. Residues 728–740 (TPKSSTTTTTTNA) show a composition bias toward low complexity. Positions 1297–1330 (FNDDDDEEEDEEEEEEMDEDDSENDEDEDSEESE) are enriched in acidic residues. Residues 1300–1328 (DDDEEEDEEEEEEMDEDDSENDEDEDSEE) adopt a coiled-coil conformation. 2 stretches are compositionally biased toward low complexity: residues 1347-1363 (TTTTTAAAATTTATATT) and 1838-1851 (SNSSPALTASSSPP). Residues 1963–1977 (GGCHHSNHHHHHHHS) are compositionally biased toward basic residues. Residues 2042–2113 (KVCTYTFTKN…KGNPCKALKP (72 aa)) form a UBR-type zinc finger. Composition is skewed to low complexity over residues 2118–2168 (PPKQ…TNTN) and 2178–2203 (SSSSSNSSPSFNNNNNNNNNGTTGSG). Residues 2893 to 2903 (DSDDSDDEFPT) show a composition bias toward acidic residues. The span at 2908 to 2917 (VTSSGLSTSA) shows a compositional bias: low complexity. Positions 3201–3211 (SSSNENVVDND) are enriched in low complexity. The ZZ-type zinc-finger motif lies at 3226–3280 (EVLFSCDLCNINPITGKRWNCSNCGDFDLCNQCYQNPEKDHPKDHIFKEFIIDEP). Residues Cys-3231, Cys-3234, Cys-3246, Cys-3249, Cys-3255, Cys-3258, His-3266, and His-3270 each contribute to the Zn(2+) site. Disordered stretches follow at residues 3282-3312 (KDGDEKESTNEPPQQQKQQDQQLQQDLQDDS), 3326-3359 (LNNNNNNNNNNESMDTSTLTTTTTTTNKTTPTTN), and 3754-3776 (SSTSQDTQQESSNNNNNNNSNDI). Low complexity-rich tracts occupy residues 3295–3307 (QQQKQQDQQLQQD) and 3327–3358 (NNNNNNNNNNESMDTSTLTTTTTTTNKTTPTT). The UIM domain occupies 3313–3332 (EYDEELKIAISMSLNNNNNN). Positions 3754–3763 (SSTSQDTQQE) are enriched in polar residues. Residues 3764–3774 (SSNNNNNNNSN) show a composition bias toward low complexity. Residues 4118–4146 (IENQEDHKRAIQTIEKESENAHKKYQRLI) are a coiled coil. Positions 4182 to 4222 (NTSTNSTGSNNQSINSSSGNISTNSSSSSSSSFGISNQSSS) are enriched in low complexity. Disordered stretches follow at residues 4182–4237 (NTST…GGVI), 4295–4323 (FISGGGQPSSNDKQQQQQQQQQQSSRQCP), and 4616–4671 (KILS…FDND). The segment covering 4223 to 4236 (GNGGGGVGSGGGGV) has biased composition (gly residues). Positions 4308-4317 (QQQQQQQQQQ) are enriched in low complexity. Positions 4585-4618 (QIQQQIALQQQQIQQQIQQQQQQLNESVSGLKIL) form a coiled coil. Composition is skewed to low complexity over residues 4619 to 4635 (SPSSSSSSPSGVGATGS) and 4645 to 4659 (SSGSSVSGSGSISSS). The interval 5357 to 5870 (PALPFVLVLL…EYLLKLYKSV (514 aa)) is UBR4 E3 catalytic module. Residues 5476 to 5620 (GFTCMVCREG…WVNLNNISRV (145 aa)) form a HemiRING-type zinc finger. Residues Cys-5479, Cys-5482, His-5554, and Cys-5557 each contribute to the Zn(2+) site. One can recognise a UZI domain in the interval 5623–5870 (PKFRILSHDL…EYLLKLYKSV (248 aa)). Residues 5819–5846 (QVDVKELLNCFENELKEFQDEMEFFDDE) are a coiled coil.

It belongs to the UBR4 family.

It participates in protein modification; protein ubiquitination. In terms of biological role, probable E3 ubiquitin-protein ligase. The protein is Probable E3 ubiquitin-protein ligase DDB_G0283893 of Dictyostelium discoideum (Social amoeba).